A 345-amino-acid chain; its full sequence is S-adenosylmethionine:tRNA ribosyltransferase-isomerase (345 aa).

Belongs to the QueA family. As to quaternary structure, monomer.

It localises to the cytoplasm. It carries out the reaction 7-aminomethyl-7-carbaguanosine(34) in tRNA + S-adenosyl-L-methionine = epoxyqueuosine(34) in tRNA + adenine + L-methionine + 2 H(+). It functions in the pathway tRNA modification; tRNA-queuosine biosynthesis. Transfers and isomerizes the ribose moiety from AdoMet to the 7-aminomethyl group of 7-deazaguanine (preQ1-tRNA) to give epoxyqueuosine (oQ-tRNA). This is S-adenosylmethionine:tRNA ribosyltransferase-isomerase from Shewanella oneidensis (strain ATCC 700550 / JCM 31522 / CIP 106686 / LMG 19005 / NCIMB 14063 / MR-1).